A 608-amino-acid polypeptide reads, in one-letter code: Phosphogluconate dehydratase (608 aa).

The [4Fe-4S] cluster site is built by cysteine 154 and cysteine 221.

It belongs to the IlvD/Edd family. Requires [4Fe-4S] cluster as cofactor.

It catalyses the reaction 6-phospho-D-gluconate = 2-dehydro-3-deoxy-6-phospho-D-gluconate + H2O. It participates in carbohydrate metabolism; Entner-Doudoroff pathway. Functionally, catalyzes the dehydration of 6-phospho-D-gluconate to 2-dehydro-3-deoxy-6-phospho-D-gluconate. In Pseudomonas aeruginosa (strain ATCC 15692 / DSM 22644 / CIP 104116 / JCM 14847 / LMG 12228 / 1C / PRS 101 / PAO1), this protein is Phosphogluconate dehydratase.